The sequence spans 200 residues: Small ribosomal subunit protein uS4 (200 aa).

The tract at residues 22-43 (TGKELERRPYAPGQHGPTQRKK) is disordered. The region spanning 92 to 170 (QRLDNIVYRL…VPEYVTFDAE (79 aa)) is the S4 RNA-binding domain.

It belongs to the universal ribosomal protein uS4 family. In terms of assembly, part of the 30S ribosomal subunit. Contacts protein S5. The interaction surface between S4 and S5 is involved in control of translational fidelity.

In terms of biological role, one of the primary rRNA binding proteins, it binds directly to 16S rRNA where it nucleates assembly of the body of the 30S subunit. With S5 and S12 plays an important role in translational accuracy. In Listeria monocytogenes serotype 4b (strain F2365), this protein is Small ribosomal subunit protein uS4.